Reading from the N-terminus, the 59-residue chain is Large ribosomal subunit protein bL32 (59 aa).

This sequence belongs to the bacterial ribosomal protein bL32 family.

This chain is Large ribosomal subunit protein bL32, found in Mycoplasma capricolum subsp. capricolum (strain California kid / ATCC 27343 / NCTC 10154).